Here is a 511-residue protein sequence, read N- to C-terminus: Maturase K (511 aa).

This sequence belongs to the intron maturase 2 family. MatK subfamily.

Its subcellular location is the plastid. It localises to the chloroplast. Usually encoded in the trnK tRNA gene intron. Probably assists in splicing its own and other chloroplast group II introns. In Bowiea volubilis (Climbing onion), this protein is Maturase K.